We begin with the raw amino-acid sequence, 319 residues long: tRNA pseudouridine synthase B (319 aa).

The Nucleophile role is filled by aspartate 49.

The protein belongs to the pseudouridine synthase TruB family. Type 1 subfamily.

The catalysed reaction is uridine(55) in tRNA = pseudouridine(55) in tRNA. Its function is as follows. Responsible for synthesis of pseudouridine from uracil-55 in the psi GC loop of transfer RNAs. The polypeptide is tRNA pseudouridine synthase B (Bartonella henselae (strain ATCC 49882 / DSM 28221 / CCUG 30454 / Houston 1) (Rochalimaea henselae)).